The sequence spans 210 residues: Syntaxin-binding protein 6 (210 aa).

N-acetylserine is present on Ser2. The region spanning 151 to 210 (GNSILHSAADSVTSAVQKASQALNERGERLGRAEEKTEDMKNSAQQFAETAHKLAMKHKC) is the v-SNARE coiled-coil homology domain.

As to quaternary structure, part of a ternary complex containing SNAP25 and STX1A that can be dissociated by NAPA and NSF. Interacts with STX4A.

It is found in the cytoplasm. The protein localises to the membrane. Its function is as follows. Forms non-fusogenic complexes with SNAP25 and STX1A and may thereby modulate the formation of functional SNARE complexes and exocytosis. The chain is Syntaxin-binding protein 6 (Stxbp6) from Mus musculus (Mouse).